We begin with the raw amino-acid sequence, 523 residues long: Fidgetin-like protein 1 (523 aa).

The disordered stretch occupies residues 114–154; sequence PVQQAVKSRPEGQFPESRNNSTKKIDAQQYSSESSSQSGFG. The segment covering 141 to 151 has biased composition (low complexity); that stretch reads QQYSSESSSQS. ATP contacts are provided by residues Ala253 and 293 to 298; that span reads GTGKTL.

Belongs to the AAA ATPase family. In terms of assembly, hexamer. Requires Mg(2+) as cofactor.

It catalyses the reaction ATP + H2O = ADP + phosphate + H(+). In Drosophila melanogaster (Fruit fly), this protein is Fidgetin-like protein 1.